A 130-amino-acid polypeptide reads, in one-letter code: Small ribosomal subunit protein uS9 (130 aa).

This sequence belongs to the universal ribosomal protein uS9 family.

The polypeptide is Small ribosomal subunit protein uS9 (Oceanobacillus iheyensis (strain DSM 14371 / CIP 107618 / JCM 11309 / KCTC 3954 / HTE831)).